Here is an 86-residue protein sequence, read N- to C-terminus: Large ribosomal subunit protein bL31 (86 aa).

The segment at 65 to 86 (YRMASSDSSEQKDKSSEEKKES) is disordered. The segment covering 73 to 86 (SEQKDKSSEEKKES) has biased composition (basic and acidic residues).

This sequence belongs to the bacterial ribosomal protein bL31 family. Type A subfamily. Part of the 50S ribosomal subunit.

Its function is as follows. Binds the 23S rRNA. The polypeptide is Large ribosomal subunit protein bL31 (Prochlorococcus marinus (strain NATL1A)).